Reading from the N-terminus, the 335-residue chain is Fructose-1,6-bisphosphatase class 1 (335 aa).

Positions 90, 113, 115, and 116 each coordinate Mg(2+). Substrate is bound by residues 116-119 (DGSS), asparagine 209, tyrosine 242, and lysine 272. Glutamate 278 lines the Mg(2+) pocket.

Belongs to the FBPase class 1 family. In terms of assembly, homotetramer. Mg(2+) serves as cofactor.

The protein resides in the cytoplasm. The enzyme catalyses beta-D-fructose 1,6-bisphosphate + H2O = beta-D-fructose 6-phosphate + phosphate. It participates in carbohydrate biosynthesis; gluconeogenesis. The chain is Fructose-1,6-bisphosphatase class 1 from Histophilus somni (strain 2336) (Haemophilus somnus).